Reading from the N-terminus, the 184-residue chain is NADH-quinone oxidoreductase subunit B (184 aa).

4 residues coordinate [4Fe-4S] cluster: C37, C38, C103, and C132.

The protein belongs to the complex I 20 kDa subunit family. NDH-1 is composed of 14 different subunits. Subunits NuoB, C, D, E, F, and G constitute the peripheral sector of the complex. The cofactor is [4Fe-4S] cluster.

It is found in the cell membrane. The enzyme catalyses a quinone + NADH + 5 H(+)(in) = a quinol + NAD(+) + 4 H(+)(out). Its function is as follows. NDH-1 shuttles electrons from NADH, via FMN and iron-sulfur (Fe-S) centers, to quinones in the respiratory chain. The immediate electron acceptor for the enzyme in this species is believed to be a menaquinone. Couples the redox reaction to proton translocation (for every two electrons transferred, four hydrogen ions are translocated across the cytoplasmic membrane), and thus conserves the redox energy in a proton gradient. The polypeptide is NADH-quinone oxidoreductase subunit B (Mycobacterium marinum (strain ATCC BAA-535 / M)).